The sequence spans 421 residues: UDP-N-acetylglucosamine 1-carboxyvinyltransferase (421 aa).

22–23 (KN) provides a ligand contact to phosphoenolpyruvate. Residue R93 participates in UDP-N-acetyl-alpha-D-glucosamine binding. C117 acts as the Proton donor in catalysis. At C117 the chain carries 2-(S-cysteinyl)pyruvic acid O-phosphothioketal. Residues 122-126 (RPVDL), D308, and I330 each bind UDP-N-acetyl-alpha-D-glucosamine.

Belongs to the EPSP synthase family. MurA subfamily.

The protein resides in the cytoplasm. It catalyses the reaction phosphoenolpyruvate + UDP-N-acetyl-alpha-D-glucosamine = UDP-N-acetyl-3-O-(1-carboxyvinyl)-alpha-D-glucosamine + phosphate. Its pathway is cell wall biogenesis; peptidoglycan biosynthesis. Cell wall formation. Adds enolpyruvyl to UDP-N-acetylglucosamine. The polypeptide is UDP-N-acetylglucosamine 1-carboxyvinyltransferase (Pseudomonas putida (strain ATCC 700007 / DSM 6899 / JCM 31910 / BCRC 17059 / LMG 24140 / F1)).